The sequence spans 113 residues: Protein ORF3 (113 aa).

Hydrophobic regions lie at residues 1–21 (MGSP…CLCC) and 32–52 (AVVG…GLIL). Residues 27 to 67 (ASRLAAVVGGATAVPAVVSGVTGLILSPSPSPIFIQPTPSL) are interaction with host HPX. Positions 47 to 71 (VTGLILSPSPSPIFIQPTPSLPMSF) are interaction with the capsid protein. The residue at position 70 (S70) is a Phosphoserine; by host. Residues 71–113 (FHNPGLELALDSRPAPLAPLGVTSPSAPPLPPVVDLPQLGLRR) are homodimerization, and interaction with host AMBP/bikunin. Positions 89–113 (PLGVTSPSAPPLPPVVDLPQLGLRR) are disordered. The segment at 94–103 (SPSAPPLPPV) is interaction with host SRC, HCK, FYN, PIK3R3 and GRB2. The PTAP/PSAP motif signature appears at 95 to 98 (PSAP).

Belongs to the hepevirus ORF3 protein family. In terms of assembly, forms homooligomers. Interacts with host SRC, HCK, FYN, PIK3R3 and GRB2 (via SH3 domain); binding does not activate the kinases. Interacts with host AMBP/bikunin and AMBP/alpha-1-microglobulin peptides. Interacts with host HPX/hemopexin. Interacts (when phosphorylated) with capsid protein ORF2. Interacts with host TSG101; this interaction plays a role in viral release from the host cell. Interacts with host SIRPA; this interaction down-regulates the phosphorylation of host IRF3. In terms of processing, palmitoylated in the N-terminus.

The protein localises to the host endoplasmic reticulum membrane. The protein resides in the host cytoplasm. It localises to the host cytoskeleton. It is found in the virion. Its subcellular location is the host cell membrane. Functionally, small multifunctional phosphoprotein involved in virion morphogenesis, egress and counteracting host innate immunity. Plays critical roles in the final steps of viral release by interacting with host TSG101, a member of the vacuolar protein-sorting pathway and using other cellular host proteins involved in vesicle formation pathway. Also acts as a viroporin and forms ion conductive pores allowing viral particle release. Impairs the generation of type I interferon by down-regulating host TLR3 and TLR7 as well as their downstream signaling pathways. Down-regulates the phosphorylation of host IRF3 via the interaction with host SIRP-alpha, thereby inhibiting IFN-I expression. Interacts with host microtubules. This is Protein ORF3 from Bandicota bengalensis (lesser bandicoot rat).